The sequence spans 155 residues: Phosphopantetheine adenylyltransferase (155 aa).

Belongs to the eukaryotic CoaD family.

It localises to the cytoplasm. It catalyses the reaction (R)-4'-phosphopantetheine + ATP + H(+) = 3'-dephospho-CoA + diphosphate. It functions in the pathway cofactor biosynthesis; coenzyme A biosynthesis. Its function is as follows. Reversibly transfers an adenylyl group from ATP to 4'-phosphopantetheine, yielding dephospho-CoA (dPCoA) and pyrophosphate. The chain is Phosphopantetheine adenylyltransferase from Pyrobaculum aerophilum (strain ATCC 51768 / DSM 7523 / JCM 9630 / CIP 104966 / NBRC 100827 / IM2).